The sequence spans 315 residues: Ribosomal RNA small subunit methyltransferase H (315 aa).

Residues Met1–Glu21 form a disordered region. S-adenosyl-L-methionine-binding positions include Gly51–His53, Asp69, Phe96, Asp117, and Gln124. The tract at residues Lys281–Ala315 is disordered.

It belongs to the methyltransferase superfamily. RsmH family.

Its subcellular location is the cytoplasm. It carries out the reaction cytidine(1402) in 16S rRNA + S-adenosyl-L-methionine = N(4)-methylcytidine(1402) in 16S rRNA + S-adenosyl-L-homocysteine + H(+). Functionally, specifically methylates the N4 position of cytidine in position 1402 (C1402) of 16S rRNA. The polypeptide is Ribosomal RNA small subunit methyltransferase H (Sorangium cellulosum (strain So ce56) (Polyangium cellulosum (strain So ce56))).